The primary structure comprises 263 residues: Auxin-responsive protein IAA3 (263 aa).

Disordered regions lie at residues 1-54 (MSPP…RRPA) and 76-121 (RVFP…PAAK). Residues 28-38 (RADDVDLKGTE) are compositionally biased toward basic and acidic residues. Residues 39 to 43 (LRLGL) carry the EAR-like (transcriptional repression) motif. In terms of domain architecture, PB1 spans 158 to 245 (FLYVKVSMDG…SCRRLRIMKG (88 aa)).

Belongs to the Aux/IAA family. In terms of assembly, homodimers and heterodimers. As to expression, highly expressed in flowers. Expressed in roots and shoots.

It is found in the nucleus. Aux/IAA proteins are short-lived transcriptional factors that function as repressors of early auxin response genes at low auxin concentrations. The sequence is that of Auxin-responsive protein IAA3 (IAA3) from Oryza sativa subsp. japonica (Rice).